Consider the following 37-residue polypeptide: Non-specific lipid-transfer protein (37 aa).

This sequence belongs to the plant LTP family.

Its function is as follows. Plant non-specific lipid-transfer proteins transfer phospholipids as well as galactolipids across membranes. May play a role in wax or cutin deposition in the cell walls of expanding epidermal cells and certain secretory tissues. This is Non-specific lipid-transfer protein from Artemisia vulgaris (Mugwort).